Consider the following 286-residue polypeptide: tRNA (guanine-N(7)-)-methyltransferase (286 aa).

S-adenosyl-L-methionine contacts are provided by residues G103, 126 to 127 (EI), 161 to 162 (NA), and C181. The active site involves D184. S-adenosyl-L-methionine is bound at residue 259–261 (TEE).

This sequence belongs to the class I-like SAM-binding methyltransferase superfamily. TrmB family. Forms a complex with TRM82.

It is found in the nucleus. It carries out the reaction guanosine(46) in tRNA + S-adenosyl-L-methionine = N(7)-methylguanosine(46) in tRNA + S-adenosyl-L-homocysteine. It participates in tRNA modification; N(7)-methylguanine-tRNA biosynthesis. Its function is as follows. Catalyzes the formation of N(7)-methylguanine at position 46 (m7G46) in tRNA. The protein is tRNA (guanine-N(7)-)-methyltransferase of Vanderwaltozyma polyspora (strain ATCC 22028 / DSM 70294 / BCRC 21397 / CBS 2163 / NBRC 10782 / NRRL Y-8283 / UCD 57-17) (Kluyveromyces polysporus).